We begin with the raw amino-acid sequence, 348 residues long: Mitogen-activated protein kinase 14B (348 aa).

In terms of domain architecture, Protein kinase spans 25 to 309 (YQNLSPVGSG…ASQALAHPYF (285 aa)). Residues 31–39 (VGSGAYGSV) and Lys54 each bind ATP. Asp169 functions as the Proton acceptor in the catalytic mechanism. Thr181 is subject to Phosphothreonine; by MAP2K3. The short motif at 181–183 (TGY) is the TXY element. Tyr183 carries the phosphotyrosine; by MAP2K3 modification.

Belongs to the protein kinase superfamily. CMGC Ser/Thr protein kinase family. MAP kinase subfamily. Mg(2+) is required as a cofactor. In terms of processing, dually phosphorylated on Thr-181 and Tyr-183, which activates the enzyme.

It localises to the cytoplasm. Its subcellular location is the nucleus. The catalysed reaction is L-seryl-[protein] + ATP = O-phospho-L-seryl-[protein] + ADP + H(+). The enzyme catalyses L-threonyl-[protein] + ATP = O-phospho-L-threonyl-[protein] + ADP + H(+). With respect to regulation, activated by threonine and tyrosine phosphorylation by the dual specificity kinase, MKK3. Functionally, serine/threonine kinase which acts as an essential component of the MAP kinase signal transduction pathway. Mapk14b is one of the four p38 MAPKs which play an important role in the cascades of cellular responses evoked by extracellular stimuli such as pro-inflammatory cytokines or physical stress leading to direct activation of transcription factors. Accordingly, p38 MAPKs phosphorylate a broad range of proteins and it has been estimated that they may have approximately 200 to 300 substrates each. Some of the targets are downstream kinases which are activated through phosphorylation and further phosphorylate additional targets. The sequence is that of Mitogen-activated protein kinase 14B (mapk14b) from Danio rerio (Zebrafish).